The following is a 545-amino-acid chain: MADILDSRPHAFSIKLWPPSLPTRKALIERITNNFSSKTIFTEKYGSLTKDQATENAKRIEDIAFSTANQQFEREPDGDGGSAVQLYAKECSKLILEVLKKGPVAKVAARELISEDSVSPRETFFDISKGKRAFIEAEEAEELLKPLKEPGNAYTKICFSNRSFGLGAARVAEPILASLKDQLKEVDLSDFVAGRPELEALEVMNIFSDALQGSILSSLNLSDNALGEKGVRAFGALLKSLSSLEELYLMNDGISKEAAQAVSELIPSTENLRVLHFHNNMTGDEGALAIAEVVKRSPLLENFRCSSTRVGSKGGIALSEALEHCTHMEKLDLRDNMFGTEAGVSLSKTLSSFKHMTELYLSYLNLEDEGAIAIVNALKESASPIEVLEMAGNDITVEAASAIAACVAAKQDLNKLNLSENELKDEGCVQIANCIEEGHSKLQYIDMSTNYIRRAGARALAHVVVKKEAFKLLNIDGNIISEEGIEELKEIFKKSPELLGALDENDPDGEEDDDDEEDEEDEENEGNGNGELESKLKNLEVNQED.

The WPP stretch occupies residues 1–116 (MADILDSRPH…VAARELISED (116 aa)). 9 LRR repeats span residues 213-236 (GSILSSLNLSDNALGEKGVRAFGA), 241-264 (LSSLEELYLMNDGISKEAAQAVSE), 269-296 (TENLRVLHFHNNMTGDEGALAIAEVVKR), 325-348 (CTHMEKLDLRDNMFGTEAGVSLSK), 353-380 (FKHMTELYLSYLNLEDEGAIAIVNALKE), 382-405 (ASPIEVLEMAGNDITVEAASAIAA), 410-433 (KQDLNKLNLSENELKDEGCVQIAN), 439-462 (HSKLQYIDMSTNYIRRAGARALAH), and 467-494 (KEAFKLLNIDGNIISEEGIEELKEIFKK). The segment at 496 to 545 (PELLGALDENDPDGEEDDDDEEDEEDEENEGNGNGELESKLKNLEVNQED) is disordered. The segment covering 503–525 (DENDPDGEEDDDDEEDEEDEENE) has biased composition (acidic residues).

The protein belongs to the RNA1 family. Homodimer. Interacts with WIP1 and WIP2 through its WPP domain. Component of Ran complexes at least composed of WIT1 or WIT2, RANGAP1 or RANGAP2, and WIP1 or WIP2 or WIP3. Interacts with WIT1.

It localises to the cytoplasm. It is found in the nucleus membrane. Its subcellular location is the cytoskeleton. The protein localises to the spindle. The protein resides in the phragmoplast. GTPase activator for the nuclear Ras-related regulatory protein Ran, converting it to the putatively inactive GDP-bound state. In Arabidopsis thaliana (Mouse-ear cress), this protein is RAN GTPase-activating protein 2 (RANGAP2).